Consider the following 105-residue polypeptide: UPF0145 protein (105 aa).

Belongs to the UPF0145 family.

This chain is UPF0145 protein, found in Enterococcus faecalis (Streptococcus faecalis).